A 377-amino-acid chain; its full sequence is Cobalt-precorrin-5B C(1)-methyltransferase (377 aa).

Positions 1–21 (MNPVRQPYDLAAPAPNGMRRG) are disordered.

The protein belongs to the CbiD family.

The enzyme catalyses Co-precorrin-5B + S-adenosyl-L-methionine = Co-precorrin-6A + S-adenosyl-L-homocysteine. The protein operates within cofactor biosynthesis; adenosylcobalamin biosynthesis; cob(II)yrinate a,c-diamide from sirohydrochlorin (anaerobic route): step 6/10. Catalyzes the methylation of C-1 in cobalt-precorrin-5B to form cobalt-precorrin-6A. This chain is Cobalt-precorrin-5B C(1)-methyltransferase, found in Chromobacterium violaceum (strain ATCC 12472 / DSM 30191 / JCM 1249 / CCUG 213 / NBRC 12614 / NCIMB 9131 / NCTC 9757 / MK).